A 388-amino-acid chain; its full sequence is Endoglucanase 3 (388 aa).

Residues 1-16 form the signal peptide; the sequence is MKHSVLAGLFATGALA. Positions 17–52 constitute a CBM1 domain; the sequence is QGGAWQQCGGVGFSGSTSCVSGYTCVYLNDWYSQCQ. 2 cysteine pairs are disulfide-bonded: C24/C41 and C35/C51. Residues 53–91 are linker; the sequence is PQPTTLRTTTTPGATSTTRSAPAATSTTPAKGKFKWFGI. The disordered stretch occupies residues 56-81; it reads TTLRTTTTPGATSTTRSAPAATSTTP. N-linked (GlcNAc...) asparagine glycans are attached at residues N92 and N155. A catalytic region spans residues 92-388; it reads NQSCAEFGKG…YNSLLKKYVP (297 aa). Residue E215 is the Proton donor of the active site. Residue N259 is glycosylated (N-linked (GlcNAc...) asparagine). E322 serves as the catalytic Nucleophile.

It belongs to the glycosyl hydrolase 5 (cellulase A) family.

The catalysed reaction is Endohydrolysis of (1-&gt;4)-beta-D-glucosidic linkages in cellulose, lichenin and cereal beta-D-glucans.. This is Endoglucanase 3 (CMC3) from Humicola insolens (Soft-rot fungus).